Here is a 289-residue protein sequence, read N- to C-terminus: ATP synthase subunit a (289 aa).

A run of 6 helical transmembrane segments spans residues 43–63 (AFHV…VLIF), 101–121 (SAVI…MNAV), 160–180 (LSVF…GGFI), 193–213 (LFVQ…TLIA), 232–252 (VFIL…GLGV), and 259–279 (AVFH…LTIV).

Belongs to the ATPase A chain family. F-type ATPases have 2 components, CF(1) - the catalytic core - and CF(0) - the membrane proton channel. CF(1) has five subunits: alpha(3), beta(3), gamma(1), delta(1), epsilon(1). CF(0) has three main subunits: a(1), b(2) and c(9-12). The alpha and beta chains form an alternating ring which encloses part of the gamma chain. CF(1) is attached to CF(0) by a central stalk formed by the gamma and epsilon chains, while a peripheral stalk is formed by the delta and b chains.

It localises to the cell inner membrane. Key component of the proton channel; it plays a direct role in the translocation of protons across the membrane. The protein is ATP synthase subunit a of Pseudomonas savastanoi pv. phaseolicola (strain 1448A / Race 6) (Pseudomonas syringae pv. phaseolicola (strain 1448A / Race 6)).